An 84-amino-acid polypeptide reads, in one-letter code: Small ribosomal subunit protein uS17 (84 aa).

It belongs to the universal ribosomal protein uS17 family. In terms of assembly, part of the 30S ribosomal subunit.

One of the primary rRNA binding proteins, it binds specifically to the 5'-end of 16S ribosomal RNA. The protein is Small ribosomal subunit protein uS17 of Clostridium perfringens (strain ATCC 13124 / DSM 756 / JCM 1290 / NCIMB 6125 / NCTC 8237 / Type A).